The chain runs to 192 residues: Adenylate kinase (192 aa).

10–18 is an ATP binding site; the sequence is GVPGVGGTT.

The protein belongs to the archaeal adenylate kinase family. In terms of assembly, monomer.

The protein localises to the cytoplasm. It catalyses the reaction AMP + ATP = 2 ADP. The protein is Adenylate kinase (adkA) of Methanotorris igneus (Methanococcus igneus).